A 357-amino-acid chain; its full sequence is S-adenosyl-L-methionine:benzoic acid/salicylic acid carboxyl methyltransferase 2 (357 aa).

Tyr18 contacts S-adenosyl-L-homocysteine. Gln25 contacts benzoate. Cys59, Asn64, Asp96, Leu97, Ser135, and Phe136 together coordinate S-adenosyl-L-homocysteine. A benzoate-binding site is contributed by Trp157. Mg(2+)-binding residues include Asn168, Asp254, Phe256, and Asn257. Gln260 serves as a coordination point for benzoate.

The protein belongs to the methyltransferase superfamily. Type-7 methyltransferase family. As to expression, predominantly expressed in petal limbs and tubes of corollas.

It catalyses the reaction benzoate + S-adenosyl-L-methionine = methyl benzoate + S-adenosyl-L-homocysteine. The catalysed reaction is salicylate + S-adenosyl-L-methionine = methyl salicylate + S-adenosyl-L-homocysteine. It functions in the pathway aromatic compound metabolism. Functionally, converts benzoic acid into the volatile ester methyl benzoates. This scent, mostly produced in a rhythmical, diurnal manner, attracts the pollinators. This chain is S-adenosyl-L-methionine:benzoic acid/salicylic acid carboxyl methyltransferase 2, found in Petunia hybrida (Petunia).